A 277-amino-acid polypeptide reads, in one-letter code: Bifunctional protein FolD (277 aa).

NADP(+) is bound by residues 160–162 (GAS), Ser-185, and Ile-226.

This sequence belongs to the tetrahydrofolate dehydrogenase/cyclohydrolase family. As to quaternary structure, homodimer.

The catalysed reaction is (6R)-5,10-methylene-5,6,7,8-tetrahydrofolate + NADP(+) = (6R)-5,10-methenyltetrahydrofolate + NADPH. The enzyme catalyses (6R)-5,10-methenyltetrahydrofolate + H2O = (6R)-10-formyltetrahydrofolate + H(+). The protein operates within one-carbon metabolism; tetrahydrofolate interconversion. In terms of biological role, catalyzes the oxidation of 5,10-methylenetetrahydrofolate to 5,10-methenyltetrahydrofolate and then the hydrolysis of 5,10-methenyltetrahydrofolate to 10-formyltetrahydrofolate. The protein is Bifunctional protein FolD of Ruthia magnifica subsp. Calyptogena magnifica.